The sequence spans 202 residues: Holliday junction branch migration complex subunit RuvA (202 aa).

Residues 1-62 (MYEYLHGLIT…DTAQTLYGFS (62 aa)) are domain I. The interval 63–141 (DFAEKQLFLK…DLAPATDDNT (79 aa)) is domain II. Positions 142-151 (LFTPEVAPTT) are flexible linker. The interval 152–202 (TENPQLADALAALTALGYRETAVKKITAQLRQFNGQTTNDYLSEGLRLLTK) is domain III.

This sequence belongs to the RuvA family. Homotetramer. Forms an RuvA(8)-RuvB(12)-Holliday junction (HJ) complex. HJ DNA is sandwiched between 2 RuvA tetramers; dsDNA enters through RuvA and exits via RuvB. An RuvB hexamer assembles on each DNA strand where it exits the tetramer. Each RuvB hexamer is contacted by two RuvA subunits (via domain III) on 2 adjacent RuvB subunits; this complex drives branch migration. In the full resolvosome a probable DNA-RuvA(4)-RuvB(12)-RuvC(2) complex forms which resolves the HJ.

It localises to the cytoplasm. In terms of biological role, the RuvA-RuvB-RuvC complex processes Holliday junction (HJ) DNA during genetic recombination and DNA repair, while the RuvA-RuvB complex plays an important role in the rescue of blocked DNA replication forks via replication fork reversal (RFR). RuvA specifically binds to HJ cruciform DNA, conferring on it an open structure. The RuvB hexamer acts as an ATP-dependent pump, pulling dsDNA into and through the RuvAB complex. HJ branch migration allows RuvC to scan DNA until it finds its consensus sequence, where it cleaves and resolves the cruciform DNA. The chain is Holliday junction branch migration complex subunit RuvA from Levilactobacillus brevis (strain ATCC 367 / BCRC 12310 / CIP 105137 / JCM 1170 / LMG 11437 / NCIMB 947 / NCTC 947) (Lactobacillus brevis).